Consider the following 223-residue polypeptide: Adenylate kinase 4, mitochondrial (223 aa).

15-20 (GSGKGT) is a binding site for a ribonucleoside 5'-triphosphate. An NMP region spans residues 35–64 (SSGHFLRENIKASTEVGEMAKQYIEKSLLV). Residues S36 and R41 each contribute to the AMP site. K60 carries the N6-succinyllysine modification. AMP-binding positions include 62 to 64 (LLV), 89 to 92 (GFPR), and Q96. The segment at 125–162 (RRWIHPPSGRVYNLDFNPPHVHGIDDVTGEPLVQQEDD) is LID. Residues R126 and 135-136 (VY) contribute to the a ribonucleoside 5'-triphosphate site. Position 170 (R170) interacts with AMP. K175 carries the N6-acetyllysine modification. An N6-acetyllysine; alternate mark is found at K179 and K186. Residues K179 and K186 each carry the N6-succinyllysine; alternate modification. T199 is a binding site for a ribonucleoside 5'-triphosphate.

This sequence belongs to the adenylate kinase family. AK3 subfamily. In terms of assembly, monomer. Interacts with SLC25A5/ANT2. Highly expressed in kidney, moderately expressed in heart and liver and weakly expressed in brain.

It localises to the mitochondrion matrix. It catalyses the reaction a ribonucleoside 5'-phosphate + ATP = a ribonucleoside 5'-diphosphate + ADP. It carries out the reaction AMP + ATP = 2 ADP. The enzyme catalyses GTP + AMP = GDP + ADP. The catalysed reaction is CMP + ATP = CDP + ADP. It catalyses the reaction GTP + CMP = CDP + GDP. It carries out the reaction dAMP + ATP = dADP + ADP. The enzyme catalyses dCMP + ATP = dCDP + ADP. The catalysed reaction is a 2'-deoxyribonucleoside 5'-diphosphate + ATP = a 2'-deoxyribonucleoside 5'-triphosphate + ADP. It catalyses the reaction a ribonucleoside 5'-diphosphate + ATP = a ribonucleoside 5'-triphosphate + ADP. It carries out the reaction GDP + ATP = GTP + ADP. The enzyme catalyses CDP + GTP = CTP + GDP. The catalysed reaction is CDP + ATP = CTP + ADP. It catalyses the reaction UDP + ATP = UTP + ADP. It carries out the reaction GTP + UDP = UTP + GDP. The enzyme catalyses dADP + GTP = dATP + GDP. The catalysed reaction is dCDP + GTP = dCTP + GDP. It catalyses the reaction dCDP + ATP = dCTP + ADP. It carries out the reaction dGDP + ATP = dGTP + ADP. The enzyme catalyses dTDP + GTP = dTTP + GDP. The catalysed reaction is dTDP + ATP = dTTP + ADP. Its function is as follows. Broad-specificity mitochondrial nucleoside phosphate kinase involved in cellular nucleotide homeostasis by catalyzing nucleoside-phosphate interconversions. Similar to other adenylate kinases, preferentially catalyzes the phosphorylation of the nucleoside monophosphate AMP with ATP as phosphate donor to produce ADP. Phosphorylates only AMP when using GTP as phosphate donor. In vitro, can also catalyze the phosphorylation of CMP, dAMP and dCMP and use GTP as an alternate phosphate donor. Moreover, exhibits a diphosphate kinase activity, producing ATP, CTP, GTP, UTP, TTP, dATP, dCTP and dGTP from the corresponding diphosphate substrates with either ATP or GTP as phosphate donors. Plays a role in controlling cellular ATP levels by regulating phosphorylation and activation of the energy sensor protein kinase AMPK. Plays a protective role in the cellular response to oxidative stress. The chain is Adenylate kinase 4, mitochondrial from Homo sapiens (Human).